The primary structure comprises 2528 residues: Reducing polyketide synthase PKS1 (2528 aa).

The Ketosynthase family 3 (KS3) domain occupies 11 to 436 (ITPIAVVGMS…GANVHAILES (426 aa)). Catalysis depends on for beta-ketoacyl synthase activity residues C186, H321, and H359. The interval 573–868 (FVFTGQGAQW…LGGPISQVID (296 aa)) is malonyl-CoA:ACP transacylase (MAT). The N-terminal hotdog fold stretch occupies residues 954–1092 (LDLIGVFDVH…GLISVLKSSK (139 aa)). The 325-residue stretch at 954 to 1278 (LDLIGVFDVH…LVALDRPNSS (325 aa)) folds into the PKS/mFAS DH domain. Residues 956–1277 (LIGVFDVHSS…TLVALDRPNS (322 aa)) form a dehydratase (DH) domain region. H986 functions as the Proton acceptor; for dehydratase activity in the catalytic mechanism. The tract at residues 1122 to 1278 (KTEWDVKDMY…LVALDRPNSS (157 aa)) is C-terminal hotdog fold. D1187 acts as the Proton donor; for dehydratase activity in catalysis. The tract at residues 1827–2139 (GLLDSLHFTV…TGRHMGKMVA (313 aa)) is enoyl reductase (ER) domain. Residues 2164–2341 (ASYLLVGGVG…ATVIDIGAVH (178 aa)) are ketoreductase (KR) domain. The Carrier domain maps to 2442–2519 (SAVTIVLSAL…ALAVKIAARS (78 aa)). At S2479 the chain carries O-(pantetheine 4'-phosphoryl)serine.

It functions in the pathway mycotoxin biosynthesis. In terms of biological role, reducing polyketide synthase (PKS); part of the Tox1A locus, one of the 2 loci that mediate the biosynthesis of T-toxin, a family of linear polyketides 37 to 45 carbons in length, of which the major component is 41 carbons, and which leads to high virulence to maize. One of the PKSs (PKS1 or PKS2) could synthesize a precursor, used subsequently by the other PKS as starter unit, to add additional carbons. Variability in the length of the final carbon backbone C35-47 could be achieved by varying the number of condensation cycles, or use of different starter or extender units or might be due to decarboxylation of the penultimate product, catalyzed by DEC1. Additional proteins are required for the biosynthesis of T-toxin, including oxidoreductases RED1, RED2, RED3, LAM1 and OXI1, as well as esterase TOX9. This is Reducing polyketide synthase PKS1 from Cochliobolus heterostrophus (strain C4 / ATCC 48331 / race T) (Southern corn leaf blight fungus).